The primary structure comprises 520 residues: Nucleobase-ascorbate transporter 1 (520 aa).

12 helical membrane-spanning segments follow: residues 36–56 (YILM…AMGG), 64–84 (VIQT…LFGT), 86–106 (LPAV…IIND), 129–149 (ALIV…WGLF), 150–170 (SRFF…LGMF), 174–194 (FPQL…VIGL), 213–233 (FPIL…TASG), 279–299 (FAMM…YIAA), 362–382 (GFMI…SIPV), 384–404 (IYAA…LSFL), 415–435 (LMIT…FAQY), and 453–473 (AFLN…AVFM).

It belongs to the nucleobase:cation symporter-2 (NCS2) (TC 2.A.40) family. Expressed in cotyledons 4 days after imbibition (DAI). Expressed in the minor and major veins of cotyledons and leaves, in the shoot apex and pedicels. Expressed in the root meristems, root tips and lateral root primordia.

It localises to the membrane. The chain is Nucleobase-ascorbate transporter 1 (NAT1) from Arabidopsis thaliana (Mouse-ear cress).